We begin with the raw amino-acid sequence, 298 residues long: Large ribosomal subunit protein uL18 (298 aa).

Belongs to the universal ribosomal protein uL18 family. As to quaternary structure, component of the large ribosomal subunit. Mature ribosomes consist of a small (40S) and a large (60S) subunit. The 40S subunit contains about 32 different proteins and 1 molecule of RNA (18S). The 60S subunit contains 45 different proteins and 3 molecules of RNA (25S, 5.8S and 5S).

The protein resides in the cytoplasm. Functionally, component of the ribosome, a large ribonucleoprotein complex responsible for the synthesis of proteins in the cell. The small ribosomal subunit (SSU) binds messenger RNAs (mRNAs) and translates the encoded message by selecting cognate aminoacyl-transfer RNA (tRNA) molecules. The large subunit (LSU) contains the ribosomal catalytic site termed the peptidyl transferase center (PTC), which catalyzes the formation of peptide bonds, thereby polymerizing the amino acids delivered by tRNAs into a polypeptide chain. The nascent polypeptides leave the ribosome through a tunnel in the LSU and interact with protein factors that function in enzymatic processing, targeting, and the membrane insertion of nascent chains at the exit of the ribosomal tunnel. The polypeptide is Large ribosomal subunit protein uL18 (Candida albicans (strain SC5314 / ATCC MYA-2876) (Yeast)).